Reading from the N-terminus, the 421-residue chain is 3-isopropylmalate dehydratase large subunit (421 aa).

[4Fe-4S] cluster contacts are provided by C302, C362, and C365.

This sequence belongs to the aconitase/IPM isomerase family. LeuC type 2 subfamily. Heterodimer of LeuC and LeuD. The cofactor is [4Fe-4S] cluster.

The catalysed reaction is (2R,3S)-3-isopropylmalate = (2S)-2-isopropylmalate. It functions in the pathway amino-acid biosynthesis; L-leucine biosynthesis; L-leucine from 3-methyl-2-oxobutanoate: step 2/4. Catalyzes the isomerization between 2-isopropylmalate and 3-isopropylmalate, via the formation of 2-isopropylmaleate. This Campylobacter concisus (strain 13826) protein is 3-isopropylmalate dehydratase large subunit.